The chain runs to 165 residues: MRLLVVAIGRLKNGPERDLAARYRERAVALGKGLGVTACDLTEIPESRARRSADRIAEEAAAILALVPADAAVIACDERGRSDWPSERIADKIGAWRDAGRSTLVLVVGGADGLHETVRGRADHILAFGAATLPHGLVRVLALEQVYRALTILAGHPYHRGDPEA.

Gly109 lines the S-adenosyl-L-methionine pocket.

The protein belongs to the RNA methyltransferase RlmH family. As to quaternary structure, homodimer.

Its subcellular location is the cytoplasm. The enzyme catalyses pseudouridine(1915) in 23S rRNA + S-adenosyl-L-methionine = N(3)-methylpseudouridine(1915) in 23S rRNA + S-adenosyl-L-homocysteine + H(+). Specifically methylates the pseudouridine at position 1915 (m3Psi1915) in 23S rRNA. The chain is Ribosomal RNA large subunit methyltransferase H from Methylorubrum extorquens (strain CM4 / NCIMB 13688) (Methylobacterium extorquens).